A 736-amino-acid chain; its full sequence is Gephyrin (736 aa).

Residues 14 to 166 (QIRVGVLTVS…FILPALPHAI (153 aa)) form an MPT Mo-transferase region. Positions 140-316 (LIINLPGSKK…VDITKVARRH (177 aa)) are interaction with GABARAP. Disordered stretches follow at residues 181–232 (DELE…DSSS) and 260–290 (TASL…PKVQ). Pro residues predominate over residues 187-199 (PSPPPPLSPPPTT). Residues Ser188 and Ser194 each carry the phosphoserine modification. Thr198 is subject to Phosphothreonine. Phosphoserine is present on Ser200. Cys212 is lipidated: S-palmitoyl cysteine. Residues 261 to 290 (ASLSTTPSESPRAQATSRLSTASCPTPKVQ) show a composition bias toward polar residues. At Ser262 the chain carries Phosphoserine. 2 positions are modified to phosphothreonine: Thr265 and Thr266. A phosphoserine mark is found at Ser268 and Ser270. A lipid anchor (S-palmitoyl cysteine) is attached at Cys284. Ser305 carries the post-translational modification Phosphoserine. The MPT adenylyltransferase stretch occupies residues 326-736 (MDKAFITVLE…VVDVMVIGRL (411 aa)).

It in the N-terminal section; belongs to the MoaB/Mog family. This sequence in the C-terminal section; belongs to the MoeA family. In terms of assembly, homotrimer, homodimer and homooligomer. Interacts with GABARAP. Interacts with SRGAP2 (via SH3 domain). Interacts with GABRA3. Interacts with GLRB. GABRA3 and GLRB occupy overlapping binding sites. Interacts with ARHGAP32; IQSEC3, INSYN1 and INSYN2A. The cofactor is Mg(2+). Palmitoylated. Palmitoylation is stimulated by GABA type A receptors activity. Palmitoylation by ZDHHC12 regulates clustering at synapses.

It localises to the postsynaptic cell membrane. The protein resides in the cell membrane. The protein localises to the cytoplasm. It is found in the cytosol. Its subcellular location is the cytoskeleton. It localises to the cell projection. The protein resides in the dendrite. The protein localises to the postsynaptic density. It carries out the reaction molybdopterin + ATP + H(+) = adenylyl-molybdopterin + diphosphate. It catalyses the reaction adenylyl-molybdopterin + molybdate = Mo-molybdopterin + AMP + H(+). It participates in cofactor biosynthesis; molybdopterin biosynthesis. Its activity is regulated as follows. Inhibited by copper and tungsten. Its function is as follows. Microtubule-associated protein involved in membrane protein-cytoskeleton interactions. It is thought to anchor the inhibitory glycine receptor (GLYR) to subsynaptic microtubules. Acts as a major instructive molecule at inhibitory synapses, where it also clusters GABA type A receptors. Also has a catalytic activity and catalyzes two steps in the biosynthesis of the molybdenum cofactor. In the first step, molybdopterin is adenylated. Subsequently, molybdate is inserted into adenylated molybdopterin and AMP is released. The sequence is that of Gephyrin from Homo sapiens (Human).